We begin with the raw amino-acid sequence, 732 residues long: Protein DIA2 (732 aa).

TPR repeat units lie at residues 15 to 48 (VLKAIELGTRLFKSGEYLQAKRIFTNALRVCDSY), 78 to 111 (IKILDNICACYEKLNDLKSCLDVSQRLLKLEPGN), and 113 to 145 (KCYIRCTRTLIKLKDWKRAYKTCSRGLQLCNND). The F-box domain maps to 204-251 (TDLVGNLPIEILPIIFQRFTTKELVTLSLVCNKWRDKILYHLDCFQEF). Ser393 carries the post-translational modification Phosphoserine. 7 LRR repeats span residues 425–449 (LEKITLICDKKKIKNFPLCRALLRG), 480–505 (FPDLKELWIEDNDNCELSKFLQLLKF), 509–532 (WKNLEKLTFRENKLYPIVNLDEDQ), 550–574 (LQNLEKLDLMGTSISGSALTRLCEQ), 579–602 (GRKLRSLNIGNCPNIQFPNNHAHT), 616–637 (LSKLEEINLSHLSSLNDSTMKS), and 645–669 (LENLKRLDISHNFEITGISIYEFLK).

Belongs to the DIA2 family. As to quaternary structure, component of the SCF(DIA2) complex containing CDC53, SKP1, RBX1 and DIA2. Interacts with SKP1.

Its subcellular location is the nucleus. Functionally, F-box protein component of a SCF (SKP1-CUL1-F-box protein) E3 ubiquitin-protein ligase complex which mediates the ubiquitination and subsequent proteasomal degradation of target proteins. Probably recognizes and binds to phosphorylated target proteins. The SCF(DIA2) complex is specifically involved in the pheromone induced degradation of phosphorylated TEC1. The SCF(DIA2) complex binds to DNA replication origins. Involved in DNA replication, genome stability, and the control of cell cycle, probably through its association to replication origins to facilitate the ubiquitination of another origin-binding protein. Required for invasive growth and growth under alkaline conditions. The chain is Protein DIA2 (DIA2) from Saccharomyces cerevisiae (strain ATCC 204508 / S288c) (Baker's yeast).